The following is a 127-amino-acid chain: Small ribosomal subunit protein bS6 (127 aa).

Residues 102-127 (IMQGAEKGKSSRKEKVDAEAEASEEA) form a disordered region. Basic and acidic residues predominate over residues 107-119 (EKGKSSRKEKVDA).

Belongs to the bacterial ribosomal protein bS6 family.

In terms of biological role, binds together with bS18 to 16S ribosomal RNA. The sequence is that of Small ribosomal subunit protein bS6 from Coxiella burnetii (strain CbuK_Q154) (Coxiella burnetii (strain Q154)).